The chain runs to 428 residues: Phosphomethylpyrimidine synthase (428 aa).

Residues Asn-66, Met-94, Tyr-123, His-162, 184–186, 225–228, and Glu-264 each bind substrate; these read SRG and DALR. His-268 contacts Zn(2+). Tyr-291 contacts substrate. Residue His-332 coordinates Zn(2+). 3 residues coordinate [4Fe-4S] cluster: Cys-408, Cys-411, and Cys-415.

The protein belongs to the ThiC family. Requires [4Fe-4S] cluster as cofactor.

The enzyme catalyses 5-amino-1-(5-phospho-beta-D-ribosyl)imidazole + S-adenosyl-L-methionine = 4-amino-2-methyl-5-(phosphooxymethyl)pyrimidine + CO + 5'-deoxyadenosine + formate + L-methionine + 3 H(+). It functions in the pathway cofactor biosynthesis; thiamine diphosphate biosynthesis. In terms of biological role, catalyzes the synthesis of the hydroxymethylpyrimidine phosphate (HMP-P) moiety of thiamine from aminoimidazole ribotide (AIR) in a radical S-adenosyl-L-methionine (SAM)-dependent reaction. The protein is Phosphomethylpyrimidine synthase of Sulfolobus acidocaldarius (strain ATCC 33909 / DSM 639 / JCM 8929 / NBRC 15157 / NCIMB 11770).